The chain runs to 362 residues: Heat-inducible transcription repressor HrcA (362 aa).

This sequence belongs to the HrcA family.

Negative regulator of class I heat shock genes (grpE-dnaK-dnaJ and groELS operons). Prevents heat-shock induction of these operons. The protein is Heat-inducible transcription repressor HrcA of Rhizobium etli (strain CIAT 652).